A 213-amino-acid polypeptide reads, in one-letter code: METMYHRFLCIPFLLILGLAQGQSKGLQTVTTFRTGLKPIDVTAIRTGLQPIATFHTGQKPIDVTAIRTGLQPIATFHTGLQPVDVTAIRTGLQPIATFQTGVQRVSTFHGEPASTLQGSGSTVIKKIMVSSMNQPVSKNEGIVEVPPPSGGTHVITEEMNWHGGRNGHKMKKLGKKKHHKNRHGGKNHHKMKKIGKHHGGGRKFGKKHRHHK.

The first 26 residues, 1–26 (METMYHRFLCIPFLLILGLAQGQSKG), serve as a signal peptide directing secretion. 3 tandem repeats follow at residues 27–48 (LQTVTTFRTGLKPIDVTAIRTG), 49–70 (LQPIATFHTGQKPIDVTAIRTG), and 71–92 (LQPIATFHTGLQPVDVTAIRTG). The 4 X 22 AA approximate tandem repeats stretch occupies residues 27-104 (LQTVTTFRTG…PIATFQTGVQ (78 aa)). The 4; truncated repeat unit spans residues 93 to 104 (LQPIATFQTGVQ). Residues 162-213 (WHGGRNGHKMKKLGKKKHHKNRHGGKNHHKMKKIGKHHGGGRKFGKKHRHHK) form a disordered region. Positions 166–213 (RNGHKMKKLGKKKHHKNRHGGKNHHKMKKIGKHHGGGRKFGKKHRHHK) are enriched in basic residues.

It localises to the secreted. The chain is Skin granule protein (sgp) from Xenopus laevis (African clawed frog).